Consider the following 146-residue polypeptide: VQLSGEEKAAVLALWDKVNEEEVGGEALGRLLVVYPWTQRFFDSFGDLSNPAAVMGNPKVKAHGKKVLHSFGEGVHHLDNLKGTFAQLSELHCDKLHVDPENFRLLGNVLVVVLARHFGKDFTPELQASYQKVVAGVANALAHKYH.

At Val1 the chain carries N-acetylvaline. Residues 2–146 (QLSGEEKAAV…VANALAHKYH (145 aa)) form the Globin domain. Position 44 is a phosphoserine (Ser44). Lys59 is modified (N6-acetyllysine). His63 is a binding site for heme b. N6-acetyllysine is present on Lys82. His92 is a binding site for heme b. Cys93 is modified (S-nitrosocysteine). At Lys144 the chain carries N6-acetyllysine.

This sequence belongs to the globin family. In terms of assembly, heterotetramer of two alpha chains and two beta chains. As to expression, red blood cells.

Its function is as follows. Involved in oxygen transport from the lung to the various peripheral tissues. The sequence is that of Hemoglobin subunit beta (HBB) from Equus hemionus kulan (Turkmenian kulan).